The primary structure comprises 120 residues: Flagellar protein FliT (120 aa).

The tract at residues 1–50 is required for homodimerization; it reads MERHQHLLSEYQQILTLSEQMLMLATVENWDALVDLEMAYLKAVENTANI. Residues 60–98 form a fliD binding region; the sequence is LQELLRQKLRSILENEIEIKRLLQRRLDKLSELVGQSTR.

It belongs to the FliT family. In terms of assembly, homodimer. Interacts with FliD and FlhC.

The protein resides in the cytoplasm. Its subcellular location is the cytosol. Its function is as follows. Dual-function protein that regulates the transcription of class 2 flagellar operons and that also acts as an export chaperone for the filament-capping protein FliD. As a transcriptional regulator, acts as an anti-FlhDC factor; it directly binds FlhC, thus inhibiting the binding of the FlhC/FlhD complex to class 2 promoters, resulting in decreased expression of class 2 flagellar operons. As a chaperone, effects FliD transition to the membrane by preventing its premature polymerization, and by directing it to the export apparatus. In Yersinia pseudotuberculosis serotype IB (strain PB1/+), this protein is Flagellar protein FliT.